Consider the following 477-residue polypeptide: Glycogen synthase (477 aa).

Position 15 (lysine 15) interacts with ADP-alpha-D-glucose.

Belongs to the glycosyltransferase 1 family. Bacterial/plant glycogen synthase subfamily.

The catalysed reaction is [(1-&gt;4)-alpha-D-glucosyl](n) + ADP-alpha-D-glucose = [(1-&gt;4)-alpha-D-glucosyl](n+1) + ADP + H(+). Its pathway is glycan biosynthesis; glycogen biosynthesis. In terms of biological role, synthesizes alpha-1,4-glucan chains using ADP-glucose. In Glaesserella parasuis serovar 5 (strain SH0165) (Haemophilus parasuis), this protein is Glycogen synthase.